An 837-amino-acid polypeptide reads, in one-letter code: Granulocyte colony-stimulating factor receptor (837 aa).

Positions 1-25 are cleaved as a signal peptide; the sequence is MVGLGACTLTGVTLIFLLLPRSLES. Disulfide bonds link cysteine 26-cysteine 52 and cysteine 46-cysteine 102. An Ig-like C2-type domain is found at 26–118; it reads CGHIEISPPV…SVQLLDQAEL (93 aa). The Extracellular portion of the chain corresponds to 26–626; sequence CGHIEISPPV…LTLRTLDPSD (601 aa). Asparagine 51, asparagine 94, and asparagine 129 each carry an N-linked (GlcNAc...) asparagine glycan. 5 consecutive Fibronectin type-III domains span residues 126 to 231, 236 to 331, 334 to 433, 434 to 529, and 530 to 624; these read SPSN…LEPP, LDIG…LRPT, APTI…NEGP, AVTG…GERA, and PPHA…TLDP. Intrachain disulfides connect cysteine 132–cysteine 143, cysteine 168–cysteine 219, cysteine 178–cysteine 187, cysteine 249–cysteine 296, and cysteine 267–cysteine 310. N-linked (GlcNAc...) asparagine glycosylation is found at asparagine 186 and asparagine 279. A WSXWS motif motif is present at residues 319-323; it reads WSPWS. N-linked (GlcNAc...) asparagine glycans are attached at residues asparagine 392, asparagine 408, asparagine 474, asparagine 487, asparagine 582, and asparagine 613. Residues 627–650 traverse the membrane as a helical segment; sequence LNIFLGILCLVLLSTTCVVTWLCC. Over 651-837 the chain is Cytoplasmic; the sequence is KRRGKTSFWS…VHGVEEQGGF (187 aa). Positions 658 to 666 match the Box 1 motif motif; that stretch reads FWSDVPDPA.

This sequence belongs to the type I cytokine receptor family. Type 2 subfamily. As to quaternary structure, homodimer. The dimeric receptor binds two CSF3 molecules. Interacts with CEACAM1; down-regulates the CSF3R-STAT3 pathway through recruitment of PTPN6 that dephosphorylates CSF3R. N-glycosylated. In terms of tissue distribution, found in bone marrow.

Its subcellular location is the membrane. In terms of biological role, receptor for granulocyte colony-stimulating factor (CSF3). In addition it may function in some adhesion or recognition events at the cell surface. In Mus musculus (Mouse), this protein is Granulocyte colony-stimulating factor receptor (Csf3r).